A 57-amino-acid polypeptide reads, in one-letter code: Light-harvesting protein B-808/866 alpha chain (57 aa).

Residue M1 is modified to N-formylmethionine. Topologically, residues 1–10 (MQPRSPVRTN) are cytoplasmic. Residues 11–30 (IVIFTILGFVVALLIHFIVL) form a helical membrane-spanning segment. H26 is an a bacteriochlorophyll binding site. Residues 31-57 (SSPEYNWLSNAEGGALLLSAARALFGI) are Periplasmic-facing.

This sequence belongs to the antenna complex alpha subunit family. The core complex is formed by different alpha and beta chains, binding bacteriochlorophyll molecules, and arranged most probably in tetrameric structures disposed around the reaction center. The non-pigmented gamma chains may constitute additional components.

Its subcellular location is the cell membrane. In terms of biological role, antenna complexes are light-harvesting systems, which transfer the excitation energy to the reaction centers. This chain is Light-harvesting protein B-808/866 alpha chain (puf2A), found in Chloroflexus aurantiacus (strain ATCC 29366 / DSM 635 / J-10-fl).